The chain runs to 253 residues: uncharacterized protein (253 aa).

The tract at residues D211–P235 is disordered. Residues P218–S229 show a composition bias toward polar residues.

This is an uncharacterized protein from Mycobacterium tuberculosis (strain CDC 1551 / Oshkosh).